The following is a 110-amino-acid chain: MASKITIFFVLALVVVCTMMVCIPTATAELVLPCKTTYDCVNLPCLGRPPLCINGQCKCTTTLTHQAKLDNLRTMNDAKTCKYTSDCDPRMRYSCVSGSYICLNGFCTCT.

Positions methionine 1 to alanine 28 are cleaved as a signal peptide. 6 cysteine pairs are disulfide-bonded: cysteine 34/cysteine 52, cysteine 40/cysteine 57, cysteine 45/cysteine 59, cysteine 81/cysteine 102, cysteine 87/cysteine 107, and cysteine 95/cysteine 109.

The protein belongs to the DEFL family.

The protein resides in the secreted. The polypeptide is Defensin-like protein 296 (Arabidopsis thaliana (Mouse-ear cress)).